Here is a 150-residue protein sequence, read N- to C-terminus: uncharacterized protein (150 aa).

This is an uncharacterized protein from Streptomyces lincolnensis.